We begin with the raw amino-acid sequence, 402 residues long: N-acetyltransferase Eis (402 aa).

Positions 3-154 (VTLCSPTEDD…RFARFHADAP (152 aa)) constitute an N-acetyltransferase domain. Residues 85–87 (VAV), 93–98 (RRGLLR), and 121–122 (SE) each bind acetyl-CoA. Catalysis depends on tyrosine 126, which acts as the Proton donor. The active-site Proton acceptor; via carboxylate is phenylalanine 402.

Belongs to the acetyltransferase Eis family. In terms of assembly, homohexamer; trimer of dimers.

It is found in the secreted. The protein resides in the host cytoplasmic vesicle. Its subcellular location is the host phagosome. The protein localises to the extracellular vesicle. It localises to the bacterial extracellular vesicle. It is found in the host extracellular space. The catalysed reaction is L-lysyl-[protein] + acetyl-CoA = N(6)-acetyl-L-lysyl-[protein] + CoA + H(+). In terms of biological role, effector that is released into the host cell and affects host immune responses. Acts as an acetyltransferase that acetylates lysine residues of host proteins. The chain is N-acetyltransferase Eis from Mycobacterium bovis (strain BCG / Pasteur 1173P2).